We begin with the raw amino-acid sequence, 358 residues long: MSEKVKFEKRESLKEKPDTANLGFGQYFTDYMLSVDYDADQGWHDMKIVPYAPFEISPAAQGLHYGQAVFEGLKAYKHNGEVVLFRPDQNFKRINNSLARLEMPEVDEEALLEGLKQLIDVERDWVPEGEGQSLYIRPFVFATEGVLGVRSSHQYKLLIILSPSGAYYGGDTLKSTKIYVEDEYVRAVRGGVGFAKVAGNYAASLLAQTNANKLGYDQVLWLDGVEQKYVEEVGSMNIFFVENGKVVTPALNGSILPGITRKSIIQLAEDLGYEVEERRVSIEELFNAYDKGELTEVFGSGTAAVISPVGTLRYEDREIVINNNEPGKITQKLYDTYTGIQSGKLEDKYGWRVEVPKY.

The residue at position 196 (K196) is an N6-(pyridoxal phosphate)lysine.

The protein belongs to the class-IV pyridoxal-phosphate-dependent aminotransferase family. Requires pyridoxal 5'-phosphate as cofactor.

The catalysed reaction is L-leucine + 2-oxoglutarate = 4-methyl-2-oxopentanoate + L-glutamate. The enzyme catalyses L-isoleucine + 2-oxoglutarate = (S)-3-methyl-2-oxopentanoate + L-glutamate. It catalyses the reaction L-valine + 2-oxoglutarate = 3-methyl-2-oxobutanoate + L-glutamate. Its pathway is amino-acid biosynthesis; L-isoleucine biosynthesis; L-isoleucine from 2-oxobutanoate: step 4/4. It functions in the pathway amino-acid biosynthesis; L-leucine biosynthesis; L-leucine from 3-methyl-2-oxobutanoate: step 4/4. The protein operates within amino-acid biosynthesis; L-valine biosynthesis; L-valine from pyruvate: step 4/4. Acts on leucine, isoleucine and valine. In Staphylococcus epidermidis (strain ATCC 12228 / FDA PCI 1200), this protein is Probable branched-chain-amino-acid aminotransferase (ilvE).